The sequence spans 255 residues: Adenosine 5'-phosphosulfate reductase (255 aa).

The segment at 1 to 39 is disordered; that stretch reads MMTAEVRTPEQGGGPLTTEPRAPRSAPGHADASAPAFGP. The [4Fe-4S] cluster site is built by Cys137, Cys138, Cys220, and Cys223. Residue Cys246 is the Nucleophile; cysteine thiosulfonate intermediate of the active site.

This sequence belongs to the PAPS reductase family. CysH subfamily. [4Fe-4S] cluster serves as cofactor.

It is found in the cytoplasm. The enzyme catalyses [thioredoxin]-disulfide + sulfite + AMP + 2 H(+) = adenosine 5'-phosphosulfate + [thioredoxin]-dithiol. The protein operates within sulfur metabolism; hydrogen sulfide biosynthesis; sulfite from sulfate. Functionally, catalyzes the formation of sulfite from adenosine 5'-phosphosulfate (APS) using thioredoxin as an electron donor. The polypeptide is Adenosine 5'-phosphosulfate reductase (Deinococcus radiodurans (strain ATCC 13939 / DSM 20539 / JCM 16871 / CCUG 27074 / LMG 4051 / NBRC 15346 / NCIMB 9279 / VKM B-1422 / R1)).